We begin with the raw amino-acid sequence, 270 residues long: Inositol monophosphatase (270 aa).

Mg(2+)-binding residues include glutamate 71, aspartate 91, leucine 93, and aspartate 94. A substrate-binding site is contributed by glutamate 71. Residues 93-96, 194-196, glutamate 213, and aspartate 221 each bind substrate; these read LDGT and GSC. A Mg(2+)-binding site is contributed by aspartate 221.

Belongs to the inositol monophosphatase superfamily. Mg(2+) serves as cofactor.

It catalyses the reaction a myo-inositol phosphate + H2O = myo-inositol + phosphate. Its pathway is polyol metabolism; myo-inositol biosynthesis; myo-inositol from D-glucose 6-phosphate: step 2/2. Its activity is regulated as follows. Inhibited by Li(+). In terms of biological role, responsible for the provision of inositol required for synthesis of phosphatidylinositol and polyphosphoinositides. In Mesembryanthemum crystallinum (Common ice plant), this protein is Inositol monophosphatase (IMP1).